We begin with the raw amino-acid sequence, 682 residues long: E3 ubiquitin ligase Rnf157 (682 aa).

Glycine 2 carries the N-myristoyl glycine lipid modification. An RING-type; degenerate zinc finger spans residues 277–317 (CVVCLSDVRDTLILPCRHCASCNVHCADTLRYQANNCPICR). A D-box 1 motif is present at residues 330–333 (RKKL). Disordered regions lie at residues 440 to 604 (QNSS…VQED) and 655 to 682 (NTQRRRLSPSSLEDPEEDRPCVWDPLAV). A compositionally biased stretch (polar residues) spans 479 to 538 (ESENLTLSSSGAVDQSSCTGTPLSSTISSPEDPASSSLAQSVMSMASSQISTDTVSSMSG). Positions 585-597 (QDAEGNDIMEEED) are enriched in acidic residues. Positions 658 to 661 (RRRL) match the D-box 2 motif. Serine 662, serine 664, and serine 665 each carry phosphoserine.

Interacts with APBB1. Interacts with CHD1; CHD1-binding controls RNF157 stability. Also interacts with ATRN, MEGF8, TECR, MSI2, PLRG1, BYSL, MTERF3, PSMA1, MRPS18B, PRPF4, FASTKD2, SLC25A1, SMU1, CNOT9, MRPS2, MAGT1, FXR2, EMD, PSMD8, HDAC1, RAN, HSD17B12, TXNDC5 and MRPL19. In terms of tissue distribution, predominantly expressed in the brain.

The protein resides in the cytoplasm. It catalyses the reaction S-ubiquitinyl-[E2 ubiquitin-conjugating enzyme]-L-cysteine + [acceptor protein]-L-lysine = [E2 ubiquitin-conjugating enzyme]-L-cysteine + N(6)-ubiquitinyl-[acceptor protein]-L-lysine.. Its function is as follows. E3 ubiquitin ligase that ubiquitinates APBB1 for its degradation by the proteasome and thus prevents apoptosis and promotes survival of neurons. Has a dual role in neurons as it is also required for dendrite growth and maintenance for which its ligase activity is not critical. May act as a scaffold molecule to regulate this process. Acts as a downstream effector of the interconnected PI3K and MAPK signaling pathways and thus participates in the regulation of the cell cycle. The sequence is that of E3 ubiquitin ligase Rnf157 (Rnf157) from Rattus norvegicus (Rat).